Consider the following 295-residue polypeptide: UDP-N-acetylenolpyruvoylglucosamine reductase (295 aa).

The region spanning 23–188 is the FAD-binding PCMH-type domain; that stretch reads KVGGPADFLA…ISAKFALKPG (166 aa). The active site involves R167. S217 acts as the Proton donor in catalysis. E287 is a catalytic residue.

The protein belongs to the MurB family. Requires FAD as cofactor.

It localises to the cytoplasm. It catalyses the reaction UDP-N-acetyl-alpha-D-muramate + NADP(+) = UDP-N-acetyl-3-O-(1-carboxyvinyl)-alpha-D-glucosamine + NADPH + H(+). Its pathway is cell wall biogenesis; peptidoglycan biosynthesis. Functionally, cell wall formation. The sequence is that of UDP-N-acetylenolpyruvoylglucosamine reductase from Streptococcus pyogenes serotype M28 (strain MGAS6180).